Consider the following 284-residue polypeptide: Phosphoenolpyruvate guanylyltransferase (284 aa).

A disordered region spans residues 94-123 (ADLSADEPAGTDAERRADPSAENRASTSAQ). A compositionally biased stretch (basic and acidic residues) spans 105–114 (DAERRADPSA). Residues Thr203, Gly219, and Ser222 each contribute to the phosphoenolpyruvate site.

Belongs to the CofC family.

The enzyme catalyses phosphoenolpyruvate + GTP + H(+) = enolpyruvoyl-2-diphospho-5'-guanosine + diphosphate. It functions in the pathway cofactor biosynthesis; coenzyme F420 biosynthesis. In terms of biological role, guanylyltransferase that catalyzes the activation of phosphoenolpyruvate (PEP) as enolpyruvoyl-2-diphospho-5'-guanosine, via the condensation of PEP with GTP. It is involved in the biosynthesis of coenzyme F420, a hydride carrier cofactor. This Sanguibacter keddieii (strain ATCC 51767 / DSM 10542 / NCFB 3025 / ST-74) protein is Phosphoenolpyruvate guanylyltransferase.